We begin with the raw amino-acid sequence, 360 residues long: MKKYKALHFGAGNIGRGLISDIYMKNNMDFALVDIDKDLIEKLNKQKSYSIIDFQTNKVFQISNFKAFSIDQEDEIKKWIEQADFISTSIGWSNLASLKKFFENVKLKEKAQIICFENGYKISSFFQSILNIDSNHFVNASVDKIIPNFKSDSLDVYVESYYEIILEQKNESQKKLNFVNYSTDLEAYINKKLFLVNAIHSTIGYLGYLKKYTYINEALNDQQILFKIKRLAKIINEILSKEYLLFKVDYLNDYLEKNLKRFSIKENQDLISRVARNPIQKLSKNERYFLIYNLVKKHNLEIDILLEIYKSIFYYDNKMDKESSKIQSTIENKSLAYALKKFSNLDQEDQEKILKSLAKK.

NAD(+) is bound at residue 6 to 17; that stretch reads ALHFGAGNIGRG.

This sequence belongs to the mannitol dehydrogenase family.

It catalyses the reaction D-mannitol 1-phosphate + NAD(+) = beta-D-fructose 6-phosphate + NADH + H(+). This Mycoplasmopsis pulmonis (strain UAB CTIP) (Mycoplasma pulmonis) protein is Mannitol-1-phosphate 5-dehydrogenase.